Consider the following 158-residue polypeptide: Small ribosomal subunit protein uS19 (158 aa).

Belongs to the universal ribosomal protein uS19 family.

In terms of biological role, protein S19 forms a complex with S13 that binds strongly to the 16S ribosomal RNA. This chain is Small ribosomal subunit protein uS19, found in Pyrobaculum neutrophilum (strain DSM 2338 / JCM 9278 / NBRC 100436 / V24Sta) (Thermoproteus neutrophilus).